The following is a 555-amino-acid chain: MKSFCDNDDNNHSNTTNLLGFSLSSNMMKMGGRGGREAIYSSSTSSAATSSSSVPPQLVVGDNTSNFGVCYGSNPNGGIYSHMSVMPLRSDGSLCLMEALNRSSHSNHHQDSSPKVEDFFGTHHNNTSHKEAMDLSLDSLFYNTTHEPNTTTNFQEFFSFPQTRNHEEETRNYGNDPSLTHGGSFNVGVYGEFQQSLSLSMSPGSQSSCITGSHHHQQNQNQNHQSQNHQQISEALVETSVGFETTTMAAAKKKRGQEDVVVVGQKQIVHRKSIDTFGQRTSQYRGVTRHRWTGRYEAHLWDNSFKKEGHSRKGRQVYLGGYDMEEKAARAYDLAALKYWGPSTHTNFSAENYQKEIEDMKNMTRQEYVAHLRRKSSGFSRGASIYRGVTRHHQHGRWQARIGRVAGNKDLYLGTFGTQEEAAEAYDVAAIKFRGTNAVTNFDITRYDVDRIMSSNTLLSGELARRNNNSIVVRNTEDQTALNAVVEGGSNKEVSTPERLLSFPAIFALPQVNQKMFGSNMGGNMSPWTSNPNAELKTVALTLPQMPVFAAWADS.

2 disordered regions span residues G34–P56 and L199–Q231. Composition is skewed to low complexity over residues S41 to S53, L199 to S208, and Q218 to Q231. DNA-binding regions (AP2/ERF) lie at residues Q283 to S349 and I385 to D443.

It belongs to the AP2/ERF transcription factor family. AP2 subfamily. In terms of assembly, interacts with ANL2, HDG2 and HDG10, and possibly with GL2, HDG3, HDG8, ATML1 and PDF2. As to expression, mostly expressed in developing flowers. Also present in mature flowers, siliques and seedlings, but not in mature roots, leaves and stems. Expressed in ovules and in vegetative and floral primordia.

Its subcellular location is the nucleus. Functionally, transcription activator that recognizes and binds to the DNA consensus sequence 5'-CAC[AG]N[AT]TNCCNANG-3'. Required for the initiation and growth of ovules integumenta, and for the development of female gametophyte. Plays a critical role in the development of gynoecium marginal tissues (e.g. stigma, style and septa), and in the fusion of carpels and of medial ridges leading to ovule primordia. Also involved in organs initiation and development, including floral organs. Maintains the meristematic competence of cells and consequently sustains expression of cell cycle regulators during organogenesis, thus controlling the final size of each organ by controlling their cell number. Regulates INO autoinduction and expression pattern. As ANT promotes petal cell identity and mediates down-regulation of AG in flower whorl 2, it functions as a class A homeotic gene. In Arabidopsis thaliana (Mouse-ear cress), this protein is AP2-like ethylene-responsive transcription factor ANT.